Consider the following 296-residue polypeptide: Diaminopimelate epimerase (296 aa).

Substrate is bound by residues Asn17, Gln49, and Asn69. Cys78 (proton donor) is an active-site residue. Substrate-binding positions include Gly79–Asn80, Asn171, Asn205, and Glu223–Arg224. The Proton acceptor role is filled by Cys232. A substrate-binding site is contributed by Gly233–Thr234.

It belongs to the diaminopimelate epimerase family. As to quaternary structure, homodimer.

The protein resides in the cytoplasm. The catalysed reaction is (2S,6S)-2,6-diaminopimelate = meso-2,6-diaminopimelate. Its pathway is amino-acid biosynthesis; L-lysine biosynthesis via DAP pathway; DL-2,6-diaminopimelate from LL-2,6-diaminopimelate: step 1/1. Catalyzes the stereoinversion of LL-2,6-diaminopimelate (L,L-DAP) to meso-diaminopimelate (meso-DAP), a precursor of L-lysine and an essential component of the bacterial peptidoglycan. This Methylorubrum extorquens (strain CM4 / NCIMB 13688) (Methylobacterium extorquens) protein is Diaminopimelate epimerase.